The primary structure comprises 259 residues: Putative zinc metalloprotease Rip2 (259 aa).

The next 2 membrane-spanning stretches (helical) occupy residues 14-34 (PIFLGLLGLTAVGGALAWLAG) and 39-59 (PLAYAGVFVMVIAGWLVSLCL). Residue histidine 60 coordinates Zn(2+). Residue glutamate 61 is part of the active site. Residue histidine 64 participates in Zn(2+) binding. 4 helical membrane-spanning segments follow: residues 97-117 (GLPMLFIALGGIGLPGAAVYV), 128-148 (TLVSLAGPTVNLALAMLLLAA), 156-176 (IHAVLWAGVAFLAFLQLTALV), and 211-231 (LVFLLVLFLAPTLNGWFFGVV).

The protein belongs to the peptidase M50B family. It depends on Zn(2+) as a cofactor.

It is found in the cell membrane. The chain is Putative zinc metalloprotease Rip2 (rip2) from Mycobacterium tuberculosis (strain ATCC 25618 / H37Rv).